A 179-amino-acid chain; its full sequence is Large ribosomal subunit protein uL6 (179 aa).

It belongs to the universal ribosomal protein uL6 family. In terms of assembly, part of the 50S ribosomal subunit.

In terms of biological role, this protein binds to the 23S rRNA, and is important in its secondary structure. It is located near the subunit interface in the base of the L7/L12 stalk, and near the tRNA binding site of the peptidyltransferase center. This Prochlorococcus marinus (strain MIT 9313) protein is Large ribosomal subunit protein uL6.